We begin with the raw amino-acid sequence, 372 residues long: Bifunctional enzyme IspD/IspF (372 aa).

The tract at residues 1-210 (MLDLSLIMLG…LNLNSPSNDI (210 aa)) is 2-C-methyl-D-erythritol 4-phosphate cytidylyltransferase. Positions 211–372 (FCGNGFDVHA…LKYFNWRNVL (162 aa)) are 2-C-methyl-D-erythritol 2,4-cyclodiphosphate synthase. Residues D217 and H219 each contribute to the a divalent metal cation site. 4-CDP-2-C-methyl-D-erythritol 2-phosphate is bound by residues 217 to 219 (DVH) and 243 to 244 (HS). An a divalent metal cation-binding site is contributed by H251. 4-CDP-2-C-methyl-D-erythritol 2-phosphate is bound by residues 265–267 (DIG), 270–274 (YPDND), 341–344 (TTTE), F348, and R351.

It in the N-terminal section; belongs to the IspD/TarI cytidylyltransferase family. IspD subfamily. In the C-terminal section; belongs to the IspF family. The cofactor is a divalent metal cation.

The catalysed reaction is 2-C-methyl-D-erythritol 4-phosphate + CTP + H(+) = 4-CDP-2-C-methyl-D-erythritol + diphosphate. It carries out the reaction 4-CDP-2-C-methyl-D-erythritol 2-phosphate = 2-C-methyl-D-erythritol 2,4-cyclic diphosphate + CMP. It functions in the pathway isoprenoid biosynthesis; isopentenyl diphosphate biosynthesis via DXP pathway; isopentenyl diphosphate from 1-deoxy-D-xylulose 5-phosphate: step 2/6. The protein operates within isoprenoid biosynthesis; isopentenyl diphosphate biosynthesis via DXP pathway; isopentenyl diphosphate from 1-deoxy-D-xylulose 5-phosphate: step 4/6. Functionally, bifunctional enzyme that catalyzes the formation of 4-diphosphocytidyl-2-C-methyl-D-erythritol from CTP and 2-C-methyl-D-erythritol 4-phosphate (MEP) (IspD), and catalyzes the conversion of 4-diphosphocytidyl-2-C-methyl-D-erythritol 2-phosphate (CDP-ME2P) to 2-C-methyl-D-erythritol 2,4-cyclodiphosphate (ME-CPP) with a corresponding release of cytidine 5-monophosphate (CMP) (IspF). The protein is Bifunctional enzyme IspD/IspF of Campylobacter fetus subsp. fetus (strain 82-40).